The following is a 45-amino-acid chain: Alpha-conotoxin-like Lp1.10 (45 aa).

Positions 1–27 are excised as a propeptide; the sequence is VVLGPASDGRNAAANVKAPDLIALTVR. 2 disulfides stabilise this stretch: C30-C36 and C31-C44. The lacks the Ser-Xaa-Pro motif that is crucial for potent interaction with nAChR stretch occupies residues 32-34; that stretch reads HNA. Residue C44 is modified to Cysteine amide.

It belongs to the conotoxin A superfamily. Expressed by the venom duct.

The protein localises to the secreted. Its function is as follows. Alpha-conotoxins act on postsynaptic membranes, they bind to the nicotinic acetylcholine receptors (nAChR) and thus inhibit them. Has possibly a distinct nAChR binding mode from other alpha-conotoxins, due to a different three residue motif (lacks the Ser-Xaa-Pro motif). This is Alpha-conotoxin-like Lp1.10 from Conus leopardus (Leopard cone).